The following is a 135-amino-acid chain: Interleukin-4 (135 aa).

Positions 1–24 are cleaved as a signal peptide; it reads MGLTYQLIPVLVCLLVCTSHLVHG. 3 cysteine pairs are disulfide-bonded: Cys-27–Cys-135, Cys-48–Cys-85, and Cys-70–Cys-105. Asn-62 carries N-linked (GlcNAc...) asparagine glycosylation.

This sequence belongs to the IL-4/IL-13 family.

It is found in the secreted. Functionally, participates in at least several B-cell activation processes as well as of other cell types. It is a costimulator of DNA-synthesis. It induces the expression of class II MHC molecules on resting B-cells. It enhances both secretion and cell surface expression of IgE and IgG1. It also regulates the expression of the low affinity Fc receptor for IgE (CD23) on both lymphocytes and monocytes. Positively regulates IL31RA expression in macrophages. Stimulates autophagy in dendritic cells by interfering with mTORC1 signaling and through the induction of RUFY4. This Bubalus bubalis (Domestic water buffalo) protein is Interleukin-4 (IL4).